A 206-amino-acid chain; its full sequence is Tetrathionate response regulatory protein TtrR (206 aa).

Positions 3-117 (TIHLLDDDTA…PLQAALERAL (115 aa)) constitute a Response regulatory domain. Asp52 bears the 4-aspartylphosphate mark. Residues 134-194 (QQLTPKEREL…ELIRRFEKMA (61 aa)) enclose the HTH luxR-type domain. Residues 153 to 172 (NREIAEAMNIAVRTVEVHRA) constitute a DNA-binding region (H-T-H motif).

Post-translationally, phosphorylated by TtrS.

It localises to the cytoplasm. Functionally, member of the two-component regulatory system TtrR/TtrS, which is required for synthesis of tetrathionate reductase. Positively regulates transcription of the ttrBCA operon. During mice infection, the ability to use tetrathionate as an electron acceptor is a growth advantage for S.typhimurium over the competing microbiota in the lumen of the inflamed gut. The polypeptide is Tetrathionate response regulatory protein TtrR (ttrR) (Salmonella typhimurium (strain LT2 / SGSC1412 / ATCC 700720)).